The following is a 361-amino-acid chain: 3-dehydroquinate synthase (361 aa).

Belongs to the archaeal-type DHQ synthase family.

It carries out the reaction 2-amino-2,3,7-trideoxy-D-lyxo-hept-6-ulosonate + NAD(+) + H2O = 3-dehydroquinate + NH4(+) + NADH + H(+). In terms of biological role, catalyzes the oxidative deamination and cyclization of 2-amino-3,7-dideoxy-D-threo-hept-6-ulosonic acid (ADH) to yield 3-dehydroquinate (DHQ), which is fed into the canonical shikimic pathway of aromatic amino acid biosynthesis. The sequence is that of 3-dehydroquinate synthase from Methanococcus vannielii (strain ATCC 35089 / DSM 1224 / JCM 13029 / OCM 148 / SB).